The following is a 912-amino-acid chain: Phosphoenolpyruvate carboxylase (912 aa).

Active-site residues include His138 and Lys575.

It belongs to the PEPCase type 1 family. Mg(2+) serves as cofactor.

It catalyses the reaction oxaloacetate + phosphate = phosphoenolpyruvate + hydrogencarbonate. In terms of biological role, forms oxaloacetate, a four-carbon dicarboxylic acid source for the tricarboxylic acid cycle. The chain is Phosphoenolpyruvate carboxylase from Lactobacillus acidophilus (strain ATCC 700396 / NCK56 / N2 / NCFM).